The primary structure comprises 145 residues: Protein MMF1, mitochondrial (145 aa).

A mitochondrion-targeting transit peptide spans 1–17; it reads MFLRNSVLRTAPVLRRG.

Belongs to the RutC family.

It localises to the mitochondrion matrix. Its function is as follows. Plays a role in the maintenance of mitochondrial DNA. In Saccharomyces cerevisiae (strain ATCC 204508 / S288c) (Baker's yeast), this protein is Protein MMF1, mitochondrial (MMF1).